Here is an 87-residue protein sequence, read N- to C-terminus: Sec-independent protein translocase protein TatA (87 aa).

The chain crosses the membrane as a helical span at residues 1-21 (MGGMSITHWIVVAVVVMIFFG). A disordered region spans residues 40 to 87 (KKGMSEDDTTPPAAPPAPAPRLENQPLPPENTTQNVAQNVPNDIKNNQ). A compositionally biased stretch (polar residues) spans 69 to 87 (ENTTQNVAQNVPNDIKNNQ).

Belongs to the TatA/E family. The Tat system comprises two distinct complexes: a TatABC complex, containing multiple copies of TatA, TatB and TatC subunits, and a separate TatA complex, containing only TatA subunits. Substrates initially bind to the TatABC complex, which probably triggers association of the separate TatA complex to form the active translocon.

It localises to the cell inner membrane. Part of the twin-arginine translocation (Tat) system that transports large folded proteins containing a characteristic twin-arginine motif in their signal peptide across membranes. TatA could form the protein-conducting channel of the Tat system. This is Sec-independent protein translocase protein TatA from Zymomonas mobilis subsp. mobilis (strain ATCC 31821 / ZM4 / CP4).